The sequence spans 652 residues: 1,4-alpha-glucan branching enzyme GlgB (652 aa).

The active-site Nucleophile is the D322. The active-site Proton donor is E373.

It belongs to the glycosyl hydrolase 13 family. GlgB subfamily. As to quaternary structure, monomer.

The catalysed reaction is Transfers a segment of a (1-&gt;4)-alpha-D-glucan chain to a primary hydroxy group in a similar glucan chain.. Its pathway is glycan biosynthesis; glycogen biosynthesis. Functionally, catalyzes the formation of the alpha-1,6-glucosidic linkages in glycogen by scission of a 1,4-alpha-linked oligosaccharide from growing alpha-1,4-glucan chains and the subsequent attachment of the oligosaccharide to the alpha-1,6 position. This chain is 1,4-alpha-glucan branching enzyme GlgB, found in Deinococcus geothermalis (strain DSM 11300 / CIP 105573 / AG-3a).